Here is a 363-residue protein sequence, read N- to C-terminus: Aminomethyltransferase (363 aa).

It belongs to the GcvT family. In terms of assembly, the glycine cleavage system is composed of four proteins: P, T, L and H.

The catalysed reaction is N(6)-[(R)-S(8)-aminomethyldihydrolipoyl]-L-lysyl-[protein] + (6S)-5,6,7,8-tetrahydrofolate = N(6)-[(R)-dihydrolipoyl]-L-lysyl-[protein] + (6R)-5,10-methylene-5,6,7,8-tetrahydrofolate + NH4(+). In terms of biological role, the glycine cleavage system catalyzes the degradation of glycine. The sequence is that of Aminomethyltransferase from Staphylococcus saprophyticus subsp. saprophyticus (strain ATCC 15305 / DSM 20229 / NCIMB 8711 / NCTC 7292 / S-41).